Reading from the N-terminus, the 130-residue chain is Type VII secretion system extracellular protein C (130 aa).

The protein belongs to the EsxC family. As to quaternary structure, forms both homodimers and heterodimers with EsxA. Homodimerization is calcium-dependent.

Its subcellular location is the secreted. The polypeptide is Type VII secretion system extracellular protein C (Staphylococcus aureus (strain USA300)).